We begin with the raw amino-acid sequence, 93 residues long: Alpha-defensin 6/12 (93 aa).

The first 19 residues, 1–19 (MKTLILLSALVLLAFQVQA), serve as a signal peptide directing secretion. Positions 20–60 (DPIQNTDEETKTEEQPGEEDQAVSVSFGDPEGTSLQEESLR) are excised as a propeptide. The tract at residues 23-54 (QNTDEETKTEEQPGEEDQAVSVSFGDPEGTSL) is disordered. Intrachain disulfides connect cysteine 64/cysteine 92, cysteine 66/cysteine 81, and cysteine 71/cysteine 91.

The protein belongs to the alpha-defensin family. In terms of tissue distribution, paneth cells of the small bowel.

It localises to the secreted. Has broad-spectrum antimicrobial properties. Has antibacterial activity against the Gram-positive bacterium L.monocytogenes EGD and the Gram-negative bacteria E.coli ML-35p and avirulent S.typhimurium 7953, but not against the mouse-virulent S.typhimurium 14028S. Probably contributes to the antimicrobial barrier function of the small bowel mucosa. This chain is Alpha-defensin 6/12 (Defa6), found in Mus musculus (Mouse).